We begin with the raw amino-acid sequence, 248 residues long: E3 ubiquitin-protein ligase BIG BROTHER (248 aa).

The segment at 197-238 (CVICQLKYKIGERQMNLPCKHVYHSECISKWLSINKVCPVCN) adopts an RING-type; atypical zinc-finger fold.

Interacts with the E2 ubiquitin conjugating enzyme UBC10 via the RING domain. Interacts with DA1. Auto-ubiquitinated. As to expression, mostly expressed in inflorescence, and, to a lower extent, in seedlings, roots, stems, leaves and siliques.

It carries out the reaction S-ubiquitinyl-[E2 ubiquitin-conjugating enzyme]-L-cysteine + [acceptor protein]-L-lysine = [E2 ubiquitin-conjugating enzyme]-L-cysteine + N(6)-ubiquitinyl-[acceptor protein]-L-lysine.. It participates in protein modification; protein ubiquitination. Functionally, E3 ubiquitin-protein ligase that limits organ size, and possibly seed size, in a dose-dependent manner. Negatively regulates the duration of cell proliferation in leaves and petals independently of the major phytohormones (e.g. auxin, cytokinin, gibberellin, brassinosteroids, ethylene, abscisic acid, jasmonic acid), probably by targeting growth stimulators for degradation. Limits the proliferation of root meristematic cells. Polyubiquitinates DA1. Involved in the promotion of leaf senescence, in addition to its function in restricting plant growth. Possesses E3 ubiquitin-protein ligase activity in vitro. This is E3 ubiquitin-protein ligase BIG BROTHER (BB) from Arabidopsis thaliana (Mouse-ear cress).